Consider the following 248-residue polypeptide: Phosphoribosylformylglycinamidine synthase subunit PurQ (248 aa).

Positions 6 to 248 constitute a Glutamine amidotransferase type-1 domain; sequence AMVLRMEGTN…IFFRILYNST (243 aa). C95 functions as the Nucleophile in the catalytic mechanism. Residues H215 and E217 contribute to the active site.

In terms of assembly, part of the FGAM synthase complex composed of 1 PurL, 1 PurQ and 2 PurS subunits.

It is found in the cytoplasm. The catalysed reaction is N(2)-formyl-N(1)-(5-phospho-beta-D-ribosyl)glycinamide + L-glutamine + ATP + H2O = 2-formamido-N(1)-(5-O-phospho-beta-D-ribosyl)acetamidine + L-glutamate + ADP + phosphate + H(+). It carries out the reaction L-glutamine + H2O = L-glutamate + NH4(+). It participates in purine metabolism; IMP biosynthesis via de novo pathway; 5-amino-1-(5-phospho-D-ribosyl)imidazole from N(2)-formyl-N(1)-(5-phospho-D-ribosyl)glycinamide: step 1/2. Part of the phosphoribosylformylglycinamidine synthase complex involved in the purines biosynthetic pathway. Catalyzes the ATP-dependent conversion of formylglycinamide ribonucleotide (FGAR) and glutamine to yield formylglycinamidine ribonucleotide (FGAM) and glutamate. The FGAM synthase complex is composed of three subunits. PurQ produces an ammonia molecule by converting glutamine to glutamate. PurL transfers the ammonia molecule to FGAR to form FGAM in an ATP-dependent manner. PurS interacts with PurQ and PurL and is thought to assist in the transfer of the ammonia molecule from PurQ to PurL. This Picrophilus torridus (strain ATCC 700027 / DSM 9790 / JCM 10055 / NBRC 100828 / KAW 2/3) protein is Phosphoribosylformylglycinamidine synthase subunit PurQ.